A 260-amino-acid polypeptide reads, in one-letter code: Large ribosomal subunit protein uL30 (260 aa).

M1 is subject to N-acetylmethionine. Tandem repeats lie at residues 7 to 18 (KKKKVAAALGTL), 19 to 30 (KKKKVPAVPETL), 31 to 42 (KKKRRNFAELKV), 43 to 54 (KRLRKKFALKTL), and 55 to 66 (RKARRKLIYEKA). The interval 7–66 (KKKKVAAALGTLKKKKVPAVPETLKKKRRNFAELKVKRLRKKFALKTLRKARRKLIYEKA) is 5 X 12 AA tandem repeats. Residue T29 is modified to Phosphothreonine. At K136 the chain carries N6-acetyllysine. K139 carries the post-translational modification N6-succinyllysine. Y151 is subject to Phosphotyrosine.

Belongs to the universal ribosomal protein uL30 family. Component of the large ribosomal subunit. Homodimer. Interacts with DHX33.

It localises to the cytoplasm. Functionally, component of the large ribosomal subunit. The ribosome is a large ribonucleoprotein complex responsible for the synthesis of proteins in the cell. Binds to G-rich structures in 28S rRNA and in mRNAs. Plays a regulatory role in the translation apparatus; inhibits cell-free translation of mRNAs. The sequence is that of Large ribosomal subunit protein uL30 (Rpl7) from Rattus norvegicus (Rat).